Reading from the N-terminus, the 97-residue chain is Plastocyanin (97 aa).

Positions 1 to 97 constitute a Plastocyanin-like domain; the sequence is AEVKLGADDG…AGMKGEVTVT (97 aa). Cu cation is bound by residues His-37, Cys-82, His-85, and Met-90.

Belongs to the plastocyanin family. Requires Cu(2+) as cofactor.

Its subcellular location is the plastid. It localises to the chloroplast thylakoid membrane. Participates in electron transfer between P700 and the cytochrome b6-f complex in photosystem I. The sequence is that of Plastocyanin (PETE) from Daucus carota (Wild carrot).